The sequence spans 177 residues: Large ribosomal subunit protein uL6 (177 aa).

Residues 152 to 171 show a composition bias toward basic and acidic residues; the sequence is RPPEPYKGKGVRYDDEEVRR. A disordered region spans residues 152 to 177; the sequence is RPPEPYKGKGVRYDDEEVRRKEAKKK.

Belongs to the universal ribosomal protein uL6 family. As to quaternary structure, part of the 50S ribosomal subunit.

Functionally, this protein binds to the 23S rRNA, and is important in its secondary structure. It is located near the subunit interface in the base of the L7/L12 stalk, and near the tRNA binding site of the peptidyltransferase center. In Shewanella sp. (strain ANA-3), this protein is Large ribosomal subunit protein uL6.